A 158-amino-acid polypeptide reads, in one-letter code: MATRPKVRRPDRALYVPPKVDRIKRVIFACGHRKRCEIGYRPLGDSGNCGPCGARRDVFAPDLYGSGPLPPCPVCGRAVVGPTVREACGHVTCNACETEACAVDRLCIGGGRRLVAICDPYPPYPGPRWRGPRPTRPEAHEAVQRSRGSSEDACTCAP.

The RING-type; degenerate zinc-finger motif lies at 72 to 111; the sequence is CPVCGRAVVGPTVREACGHVTCNACETEACAVDRLCIGGG. The segment at 126 to 158 is disordered; sequence GPRWRGPRPTRPEAHEAVQRSRGSSEDACTCAP. The span at 135 to 150 shows a compositional bias: basic and acidic residues; the sequence is TRPEAHEAVQRSRGSS.

The polypeptide is Putative zinc-binding protein ORF9 (ORF9) (Ictalurid herpesvirus 1 (strain Auburn) (IcHV-1)).